A 255-amino-acid chain; its full sequence is NAD(P)H-quinone oxidoreductase subunit K, chloroplastic (255 aa).

Residues Cys47, Cys48, Cys112, and Cys143 each contribute to the [4Fe-4S] cluster site.

It belongs to the complex I 20 kDa subunit family. In terms of assembly, NDH is composed of at least 16 different subunits, 5 of which are encoded in the nucleus. The cofactor is [4Fe-4S] cluster.

The protein localises to the plastid. It localises to the chloroplast thylakoid membrane. The catalysed reaction is a plastoquinone + NADH + (n+1) H(+)(in) = a plastoquinol + NAD(+) + n H(+)(out). It carries out the reaction a plastoquinone + NADPH + (n+1) H(+)(in) = a plastoquinol + NADP(+) + n H(+)(out). NDH shuttles electrons from NAD(P)H:plastoquinone, via FMN and iron-sulfur (Fe-S) centers, to quinones in the photosynthetic chain and possibly in a chloroplast respiratory chain. The immediate electron acceptor for the enzyme in this species is believed to be plastoquinone. Couples the redox reaction to proton translocation, and thus conserves the redox energy in a proton gradient. This is NAD(P)H-quinone oxidoreductase subunit K, chloroplastic from Zygnema circumcarinatum (Green alga).